The chain runs to 117 residues: UPF0102 protein YPN_3432 (117 aa).

Belongs to the UPF0102 family.

The sequence is that of UPF0102 protein YPN_3432 from Yersinia pestis bv. Antiqua (strain Nepal516).